Reading from the N-terminus, the 735-residue chain is Disintegrin and metalloproteinase domain-containing protein 2 (735 aa).

The signal sequence occupies residues 1 to 15; the sequence is MLCLLLLLCGLASLG. A propeptide spanning residues 16-176 is cleaved from the precursor; that stretch reads GPLKKYVENS…KIKSIKSSVR (161 aa). At 16–680 the chain is on the extracellular side; that stretch reads GPLKKYVENS…EGAYHTKSRK (665 aa). Residues asparagine 55, asparagine 220, and asparagine 288 are each glycosylated (N-linked (GlcNAc...) asparagine). One can recognise a Peptidase M12B domain in the interval 178–375; it reads HYIEMHIIVE…QVSQCLQNQP (198 aa). Cystine bridges form between cysteine 287/cysteine 370, cysteine 329/cysteine 354, cysteine 331/cysteine 336, and cysteine 442/cysteine 455. Asparagine 353 carries N-linked (GlcNAc...) asparagine glycosylation. The 87-residue stretch at 384–470 folds into the Disintegrin domain; the sequence is NPVCGNNRVE…ACQEDLYVIN (87 aa). N-linked (GlcNAc...) asparagine glycans are attached at residues asparagine 456 and asparagine 564. The EGF-like domain occupies 610–643; that stretch reads LGYDCTPATCSDHGVCNNKRHCHCNPTYVPPNCE. Cystine bridges form between cysteine 614–cysteine 625, cysteine 619–cysteine 631, and cysteine 633–cysteine 642. The helical transmembrane segment at 681–701 threads the bilayer; sequence WPFFLIIPFFVIFSVLVATVV. The Cytoplasmic segment spans residues 702 to 735; sequence KVYYQKKKWKTEDYANDENIESESEPKSSKVSSK. The tract at residues 716–735 is disordered; the sequence is ANDENIESESEPKSSKVSSK. At serine 723 the chain carries Phosphoserine.

As to quaternary structure, heterodimer with ADAM1/fertilin subunit alpha. The signal and the metalloprotease domain are cleaved during the epididymal maturation of the spermatozoa. Expressed specifically in testis.

The protein localises to the membrane. Functionally, sperm surface membrane protein that may be involved in sperm-egg plasma membrane adhesion and fusion during fertilization. Could have a direct role in sperm-zona binding or migration of sperm from the uterus into the oviduct. Interactions with egg membrane could be mediated via binding between its disintegrin-like domain to one or more integrins receptors on the egg. This is a non catalytic metalloprotease-like protein. This Cavia porcellus (Guinea pig) protein is Disintegrin and metalloproteinase domain-containing protein 2 (ADAM2).